Here is a 300-residue protein sequence, read N- to C-terminus: MPASAAPCAAPYGTPSPAAPEGAHTAAAGRGAPVSLPRLAQLRAAGEKITMLTAYDATFAALADAAGVECILVGDSLGMVCQGLPSTVGVQLDTMAYHSACVARGLHRVQGSAWLVADLPYGSYAESREQALRSACVLMQAGAQMVKLEGGGWTAPTVEFLVQRGVPVCAHLGLTPQSVHALGGYRVQGKTDAGARTLRQQARELQDAGAALLVLEMVPAALARDITDALPHCHTIGIGAGNGTAGQVLVLHDMLGMNLGKMPRFVHNFMQDAGSVHGAIAAYVQAVKQGRFPDDALHAW.

Residues Asp-75 and Asp-118 each coordinate Mg(2+). Residues 75-76 (DS), Asp-118, and Lys-147 contribute to the 3-methyl-2-oxobutanoate site. Glu-149 is a binding site for Mg(2+). Glu-216 functions as the Proton acceptor in the catalytic mechanism.

The protein belongs to the PanB family. Homodecamer; pentamer of dimers. Mg(2+) serves as cofactor.

It localises to the cytoplasm. It carries out the reaction 3-methyl-2-oxobutanoate + (6R)-5,10-methylene-5,6,7,8-tetrahydrofolate + H2O = 2-dehydropantoate + (6S)-5,6,7,8-tetrahydrofolate. It functions in the pathway cofactor biosynthesis; (R)-pantothenate biosynthesis; (R)-pantoate from 3-methyl-2-oxobutanoate: step 1/2. Catalyzes the reversible reaction in which hydroxymethyl group from 5,10-methylenetetrahydrofolate is transferred onto alpha-ketoisovalerate to form ketopantoate. This chain is 3-methyl-2-oxobutanoate hydroxymethyltransferase, found in Verminephrobacter eiseniae (strain EF01-2).